The following is a 353-amino-acid chain: Probable dual-specificity RNA methyltransferase RlmN (353 aa).

The Proton acceptor role is filled by glutamate 95. The region spanning 103–333 is the Radical SAM core domain; sequence DGGRKTICIS…PILNRRSPGR (231 aa). Cysteine 110 and cysteine 339 are joined by a disulfide. [4Fe-4S] cluster-binding residues include cysteine 117, cysteine 121, and cysteine 124. Residues 164-165, serine 196, 219-221, and asparagine 296 contribute to the S-adenosyl-L-methionine site; these read GE and SLN. The active-site S-methylcysteine intermediate is cysteine 339.

Belongs to the radical SAM superfamily. RlmN family. The cofactor is [4Fe-4S] cluster.

The protein localises to the cytoplasm. It carries out the reaction adenosine(2503) in 23S rRNA + 2 reduced [2Fe-2S]-[ferredoxin] + 2 S-adenosyl-L-methionine = 2-methyladenosine(2503) in 23S rRNA + 5'-deoxyadenosine + L-methionine + 2 oxidized [2Fe-2S]-[ferredoxin] + S-adenosyl-L-homocysteine. The catalysed reaction is adenosine(37) in tRNA + 2 reduced [2Fe-2S]-[ferredoxin] + 2 S-adenosyl-L-methionine = 2-methyladenosine(37) in tRNA + 5'-deoxyadenosine + L-methionine + 2 oxidized [2Fe-2S]-[ferredoxin] + S-adenosyl-L-homocysteine. Its function is as follows. Specifically methylates position 2 of adenine 2503 in 23S rRNA and position 2 of adenine 37 in tRNAs. This is Probable dual-specificity RNA methyltransferase RlmN from Leptospira biflexa serovar Patoc (strain Patoc 1 / Ames).